We begin with the raw amino-acid sequence, 260 residues long: Phosphate import ATP-binding protein PstB (260 aa).

The ABC transporter domain maps to 14–255 (IETENLNLFY…PKNTKTEEYI (242 aa)). 46-53 (GPSGCGKS) contributes to the ATP binding site.

This sequence belongs to the ABC transporter superfamily. Phosphate importer (TC 3.A.1.7) family. The complex is composed of two ATP-binding proteins (PstB), two transmembrane proteins (PstC and PstA) and a solute-binding protein (PstS).

Its subcellular location is the cell inner membrane. It catalyses the reaction phosphate(out) + ATP + H2O = ADP + 2 phosphate(in) + H(+). Part of the ABC transporter complex PstSACB involved in phosphate import. Responsible for energy coupling to the transport system. The polypeptide is Phosphate import ATP-binding protein PstB (Borreliella burgdorferi (strain ATCC 35210 / DSM 4680 / CIP 102532 / B31) (Borrelia burgdorferi)).